The primary structure comprises 242 residues: Probable transcriptional regulatory protein XOO1543 (242 aa).

This sequence belongs to the TACO1 family.

The protein resides in the cytoplasm. This is Probable transcriptional regulatory protein XOO1543 from Xanthomonas oryzae pv. oryzae (strain MAFF 311018).